The following is a 525-amino-acid chain: Glutamate--cysteine ligase (525 aa).

The protein belongs to the glutamate--cysteine ligase type 1 family. Type 1 subfamily.

The catalysed reaction is L-cysteine + L-glutamate + ATP = gamma-L-glutamyl-L-cysteine + ADP + phosphate + H(+). Its pathway is sulfur metabolism; glutathione biosynthesis; glutathione from L-cysteine and L-glutamate: step 1/2. The polypeptide is Glutamate--cysteine ligase (Pseudoalteromonas translucida (strain TAC 125)).